A 282-amino-acid polypeptide reads, in one-letter code: Phosphatidylserine decarboxylase proenzyme (282 aa).

Residues Asp88, His145, and Ser248 each act as charge relay system; for autoendoproteolytic cleavage activity in the active site. The active-site Schiff-base intermediate with substrate; via pyruvic acid; for decarboxylase activity is the Ser248. Ser248 carries the pyruvic acid (Ser); by autocatalysis modification.

Belongs to the phosphatidylserine decarboxylase family. PSD-B subfamily. Prokaryotic type I sub-subfamily. Heterodimer of a large membrane-associated beta subunit and a small pyruvoyl-containing alpha subunit. Pyruvate is required as a cofactor. Is synthesized initially as an inactive proenzyme. Formation of the active enzyme involves a self-maturation process in which the active site pyruvoyl group is generated from an internal serine residue via an autocatalytic post-translational modification. Two non-identical subunits are generated from the proenzyme in this reaction, and the pyruvate is formed at the N-terminus of the alpha chain, which is derived from the carboxyl end of the proenzyme. The autoendoproteolytic cleavage occurs by a canonical serine protease mechanism, in which the side chain hydroxyl group of the serine supplies its oxygen atom to form the C-terminus of the beta chain, while the remainder of the serine residue undergoes an oxidative deamination to produce ammonia and the pyruvoyl prosthetic group on the alpha chain. During this reaction, the Ser that is part of the protease active site of the proenzyme becomes the pyruvoyl prosthetic group, which constitutes an essential element of the active site of the mature decarboxylase.

It is found in the cell membrane. It carries out the reaction a 1,2-diacyl-sn-glycero-3-phospho-L-serine + H(+) = a 1,2-diacyl-sn-glycero-3-phosphoethanolamine + CO2. Its pathway is phospholipid metabolism; phosphatidylethanolamine biosynthesis; phosphatidylethanolamine from CDP-diacylglycerol: step 2/2. Functionally, catalyzes the formation of phosphatidylethanolamine (PtdEtn) from phosphatidylserine (PtdSer). This is Phosphatidylserine decarboxylase proenzyme from Dechloromonas aromatica (strain RCB).